The following is a 206-amino-acid chain: Inner membrane protein YnjF (206 aa).

Residues 1 to 37 (MLDRHLHPRIKPLLHQCVRVLDKPGITPDGLTLVGFA) are Periplasmic-facing. Residues 38–60 (IGVLALPFLALGWYLAALVVILL) traverse the membrane as a helical segment. At 61-79 (NRLLDGLDGALARRRELTD) the chain is on the cytoplasmic side. Residues 80–102 (AGGFLDISLDFLFYALVPFGFIL) form a helical membrane-spanning segment. The Periplasmic segment spans residues 103–111 (AAPEQNALA). A helical transmembrane segment spans residues 112-134 (GGWLLFAFIGTGSSFLAFAALAA). Residues 135–146 (KHQIDNPGYAHK) lie on the Cytoplasmic side of the membrane. The chain crosses the membrane as a helical span at residues 147 to 169 (SFYYLGGLTEGTETILLFVLGCL). At 170-173 (FPAW) the chain is on the periplasmic side. A helical membrane pass occupies residues 174 to 196 (FAWFAWIFGALCWMTTFTRVWSG). Residues 197 to 206 (YLTLKSLQRQ) lie on the Cytoplasmic side of the membrane.

It belongs to the CDP-alcohol phosphatidyltransferase class-I family.

It localises to the cell inner membrane. This chain is Inner membrane protein YnjF (ynjF), found in Escherichia coli (strain K12).